A 1069-amino-acid chain; its full sequence is Carbamoyl phosphate synthase large chain (1069 aa).

Residues methionine 1–glutamate 401 are carboxyphosphate synthetic domain. ATP is bound by residues arginine 129, arginine 169, glycine 175, glycine 176, lysine 208, valine 210, glutamate 215, glycine 241, isoleucine 242, histidine 243, glutamine 284, and glutamate 298. Residues arginine 133 to leucine 327 form the ATP-grasp 1 domain. Positions 284, 298, and 300 each coordinate Mg(2+). Mn(2+) contacts are provided by glutamine 284, glutamate 298, and asparagine 300. Residues isoleucine 402–valine 549 are oligomerization domain. Positions glutamate 550–tyrosine 932 are carbamoyl phosphate synthetic domain. Residues aspartate 674–leucine 864 enclose the ATP-grasp 2 domain. Residues arginine 710, lysine 749, leucine 751, glutamate 755, glycine 780, valine 781, histidine 782, serine 783, glutamine 823, and glutamate 835 each coordinate ATP. The Mg(2+) site is built by glutamine 823, glutamate 835, and asparagine 837. Mn(2+) is bound by residues glutamine 823, glutamate 835, and asparagine 837. In terms of domain architecture, MGS-like spans tyrosine 932 to lysine 1069. The allosteric domain stretch occupies residues methionine 933 to lysine 1069.

The protein belongs to the CarB family. In terms of assembly, composed of two chains; the small (or glutamine) chain promotes the hydrolysis of glutamine to ammonia, which is used by the large (or ammonia) chain to synthesize carbamoyl phosphate. Tetramer of heterodimers (alpha,beta)4. Mg(2+) is required as a cofactor. Requires Mn(2+) as cofactor.

The catalysed reaction is hydrogencarbonate + L-glutamine + 2 ATP + H2O = carbamoyl phosphate + L-glutamate + 2 ADP + phosphate + 2 H(+). It catalyses the reaction hydrogencarbonate + NH4(+) + 2 ATP = carbamoyl phosphate + 2 ADP + phosphate + 2 H(+). It functions in the pathway amino-acid biosynthesis; L-arginine biosynthesis; carbamoyl phosphate from bicarbonate: step 1/1. It participates in pyrimidine metabolism; UMP biosynthesis via de novo pathway; (S)-dihydroorotate from bicarbonate: step 1/3. Large subunit of the glutamine-dependent carbamoyl phosphate synthetase (CPSase). CPSase catalyzes the formation of carbamoyl phosphate from the ammonia moiety of glutamine, carbonate, and phosphate donated by ATP, constituting the first step of 2 biosynthetic pathways, one leading to arginine and/or urea and the other to pyrimidine nucleotides. The large subunit (synthetase) binds the substrates ammonia (free or transferred from glutamine from the small subunit), hydrogencarbonate and ATP and carries out an ATP-coupled ligase reaction, activating hydrogencarbonate by forming carboxy phosphate which reacts with ammonia to form carbamoyl phosphate. This chain is Carbamoyl phosphate synthase large chain, found in Clostridium beijerinckii (strain ATCC 51743 / NCIMB 8052) (Clostridium acetobutylicum).